A 773-amino-acid polypeptide reads, in one-letter code: DNA gyrase subunit B (773 aa).

In terms of domain architecture, Toprim spans 416 to 530 (SEIFLVEGDS…QGHVYIAQAP (115 aa)). 3 residues coordinate Mg(2+): E422, D495, and D497.

This sequence belongs to the type II topoisomerase GyrB family. In terms of assembly, heterotetramer, composed of two GyrA and two GyrB chains. In the heterotetramer, GyrA contains the active site tyrosine that forms a transient covalent intermediate with DNA, while GyrB binds cofactors and catalyzes ATP hydrolysis. Requires Mg(2+) as cofactor. Mn(2+) is required as a cofactor. It depends on Ca(2+) as a cofactor.

It localises to the cytoplasm. It catalyses the reaction ATP-dependent breakage, passage and rejoining of double-stranded DNA.. In terms of biological role, a type II topoisomerase that negatively supercoils closed circular double-stranded (ds) DNA in an ATP-dependent manner to modulate DNA topology and maintain chromosomes in an underwound state. Negative supercoiling favors strand separation, and DNA replication, transcription, recombination and repair, all of which involve strand separation. Also able to catalyze the interconversion of other topological isomers of dsDNA rings, including catenanes and knotted rings. Type II topoisomerases break and join 2 DNA strands simultaneously in an ATP-dependent manner. The sequence is that of DNA gyrase subunit B from Helicobacter pylori (strain ATCC 700392 / 26695) (Campylobacter pylori).